A 385-amino-acid polypeptide reads, in one-letter code: Queuine tRNA-ribosyltransferase (385 aa).

The Proton acceptor role is filled by aspartate 92. Substrate contacts are provided by residues 92-96 (DSGGF), aspartate 146, glutamine 188, and glycine 215. Residues 246–252 (GVGHPED) are RNA binding. Aspartate 265 acts as the Nucleophile in catalysis. The interval 270–274 (TRTGR) is RNA binding; important for wobble base 34 recognition. Zn(2+)-binding residues include cysteine 303, cysteine 305, cysteine 308, and histidine 334.

The protein belongs to the queuine tRNA-ribosyltransferase family. Homodimer. Within each dimer, one monomer is responsible for RNA recognition and catalysis, while the other monomer binds to the replacement base PreQ1. Zn(2+) is required as a cofactor.

It carries out the reaction 7-aminomethyl-7-carbaguanine + guanosine(34) in tRNA = 7-aminomethyl-7-carbaguanosine(34) in tRNA + guanine. It participates in tRNA modification; tRNA-queuosine biosynthesis. Its function is as follows. Catalyzes the base-exchange of a guanine (G) residue with the queuine precursor 7-aminomethyl-7-deazaguanine (PreQ1) at position 34 (anticodon wobble position) in tRNAs with GU(N) anticodons (tRNA-Asp, -Asn, -His and -Tyr). Catalysis occurs through a double-displacement mechanism. The nucleophile active site attacks the C1' of nucleotide 34 to detach the guanine base from the RNA, forming a covalent enzyme-RNA intermediate. The proton acceptor active site deprotonates the incoming PreQ1, allowing a nucleophilic attack on the C1' of the ribose to form the product. After dissociation, two additional enzymatic reactions on the tRNA convert PreQ1 to queuine (Q), resulting in the hypermodified nucleoside queuosine (7-(((4,5-cis-dihydroxy-2-cyclopenten-1-yl)amino)methyl)-7-deazaguanosine). This Thermus thermophilus (strain ATCC BAA-163 / DSM 7039 / HB27) protein is Queuine tRNA-ribosyltransferase.